The chain runs to 477 residues: Penton protein (477 aa).

Belongs to the adenoviridae penton family. In terms of assembly, interacts with the fiber protein (via N-terminal tail region). Interacts with the capsid vertex protein; this interaction binds the penton base to neighboring peripentonal hexons.

The protein localises to the virion. It localises to the host nucleus. Its function is as follows. Major capsid protein that self-associates to form penton base pentamers, each in the shape of a pentagon, situated at the 12 vertices of the pseudo T=25 capsid. Involved in virus secondary attachment to host cell after initial attachment by the fiber protein, and in endocytosis of virions. As the virus enters the host cell, penton proteins are shed concomitant with virion acidification in the endosome. The protein is Penton protein of Canis lupus familiaris (Dog).